The primary structure comprises 325 residues: tRNA dimethylallyltransferase (325 aa).

12–19 lines the ATP pocket; sequence GPTASGKT. Residue 14–19 participates in substrate binding; sequence TASGKT. Interaction with substrate tRNA stretches follow at residues 37-40, 161-165, and 244-249; these read DSAL, QRIHR, and RCVGYR.

It belongs to the IPP transferase family. In terms of assembly, monomer. The cofactor is Mg(2+).

It carries out the reaction adenosine(37) in tRNA + dimethylallyl diphosphate = N(6)-dimethylallyladenosine(37) in tRNA + diphosphate. Catalyzes the transfer of a dimethylallyl group onto the adenine at position 37 in tRNAs that read codons beginning with uridine, leading to the formation of N6-(dimethylallyl)adenosine (i(6)A). In Chromobacterium violaceum (strain ATCC 12472 / DSM 30191 / JCM 1249 / CCUG 213 / NBRC 12614 / NCIMB 9131 / NCTC 9757 / MK), this protein is tRNA dimethylallyltransferase.